The following is a 296-amino-acid chain: Phosphatidylglycerol--prolipoprotein diacylglyceryl transferase (296 aa).

Transmembrane regions (helical) follow at residues Ile-10–Phe-30, Leu-57–Tyr-77, Val-92–Leu-112, and Leu-119–Gly-139. Arg-140 lines the a 1,2-diacyl-sn-glycero-3-phospho-(1'-sn-glycerol) pocket. A run of 3 helical transmembrane segments spans residues Gln-194 to Met-214, Tyr-220 to Val-240, and Leu-255 to Leu-275.

The protein belongs to the Lgt family.

It localises to the cell inner membrane. It catalyses the reaction L-cysteinyl-[prolipoprotein] + a 1,2-diacyl-sn-glycero-3-phospho-(1'-sn-glycerol) = an S-1,2-diacyl-sn-glyceryl-L-cysteinyl-[prolipoprotein] + sn-glycerol 1-phosphate + H(+). Its pathway is protein modification; lipoprotein biosynthesis (diacylglyceryl transfer). Catalyzes the transfer of the diacylglyceryl group from phosphatidylglycerol to the sulfhydryl group of the N-terminal cysteine of a prolipoprotein, the first step in the formation of mature lipoproteins. This chain is Phosphatidylglycerol--prolipoprotein diacylglyceryl transferase, found in Xanthomonas campestris pv. campestris (strain 8004).